The following is a 271-amino-acid chain: Putative phosphoenolpyruvate synthase regulatory protein (271 aa).

ADP is bound at residue 151–158; that stretch reads GVSRSGKT.

It belongs to the pyruvate, phosphate/water dikinase regulatory protein family. PSRP subfamily.

It catalyses the reaction [pyruvate, water dikinase] + ADP = [pyruvate, water dikinase]-phosphate + AMP + H(+). It carries out the reaction [pyruvate, water dikinase]-phosphate + phosphate + H(+) = [pyruvate, water dikinase] + diphosphate. In terms of biological role, bifunctional serine/threonine kinase and phosphorylase involved in the regulation of the phosphoenolpyruvate synthase (PEPS) by catalyzing its phosphorylation/dephosphorylation. In Paraburkholderia xenovorans (strain LB400), this protein is Putative phosphoenolpyruvate synthase regulatory protein.